Consider the following 330-residue polypeptide: Ribosomal RNA small subunit methyltransferase A (330 aa).

Residues His-29, Leu-31, Gly-56, Glu-77, and Asp-98 each contribute to the S-adenosyl-L-methionine site. The disordered stretch occupies residues 115 to 158; the sequence is PVRSAGLPQAETAPKGLEPAGSSSQQGPRDWLRQTAGAAAPSRG. Position 177 (Asn-177) interacts with S-adenosyl-L-methionine.

Belongs to the class I-like SAM-binding methyltransferase superfamily. rRNA adenine N(6)-methyltransferase family. RsmA subfamily.

The protein localises to the cytoplasm. It catalyses the reaction adenosine(1518)/adenosine(1519) in 16S rRNA + 4 S-adenosyl-L-methionine = N(6)-dimethyladenosine(1518)/N(6)-dimethyladenosine(1519) in 16S rRNA + 4 S-adenosyl-L-homocysteine + 4 H(+). In terms of biological role, specifically dimethylates two adjacent adenosines (A1518 and A1519) in the loop of a conserved hairpin near the 3'-end of 16S rRNA in the 30S particle. May play a critical role in biogenesis of 30S subunits. In Polaromonas sp. (strain JS666 / ATCC BAA-500), this protein is Ribosomal RNA small subunit methyltransferase A.